The chain runs to 316 residues: Cell surface superoxide dismutase [Cu-Zn] 6 (316 aa).

The first 18 residues, 1-18 (MIFIPIIILIYLVSIAAS), serve as a signal peptide directing secretion. Cu cation-binding residues include histidine 78, histidine 80, and histidine 96. 2 residues coordinate Zn(2+): histidine 96 and aspartate 119. Asparagine 128 is a glycosylation site (N-linked (GlcNAc...) asparagine). Histidine 159 lines the Cu cation pocket. Residues asparagine 162 and asparagine 240 are each glycosylated (N-linked (GlcNAc...) asparagine). The interval 243–263 (DNVYSPEETRPSDQNKKSHRH) is disordered. Residues 249-258 (EETRPSDQNK) are compositionally biased toward basic and acidic residues. N-linked (GlcNAc...) asparagine glycosylation is found at asparagine 278 and asparagine 281. Residue serine 288 is the site of GPI-anchor amidated serine attachment. Positions 289–316 (SDCLNDGMMVTGSVFGSLVLGIAAGIFV) are cleaved as a propeptide — removed in mature form.

Belongs to the Cu-Zn superoxide dismutase family. Cu cation serves as cofactor. Zn(2+) is required as a cofactor. In terms of processing, the GPI-anchor is attached to the protein in the endoplasmic reticulum and serves to target the protein to the cell surface. There, the glucosamine-inositol phospholipid moiety is cleaved off and the GPI-modified mannoprotein is covalently attached via its lipidless GPI glycan remnant to the 1,6-beta-glucan of the outer cell wall layer.

The protein localises to the secreted. Its subcellular location is the cell wall. It localises to the membrane. The catalysed reaction is 2 superoxide + 2 H(+) = H2O2 + O2. Superoxide dismutases serve to convert damaging superoxide radicals, a key form of ROS, to less damaging hydrogen peroxide that can be converted into water by catalase action. May be involved protection against extracellular stress. This chain is Cell surface superoxide dismutase [Cu-Zn] 6 (SOD6), found in Candida albicans (strain SC5314 / ATCC MYA-2876) (Yeast).